The following is a 315-amino-acid chain: Putative peptide transport system permease protein BMEII0209 (315 aa).

Helical transmembrane passes span 13 to 33, 102 to 122, 136 to 156, 178 to 198, 238 to 258, and 287 to 307; these read AIPVMLIVAILTFLLMKLLPG, LALLAFAITIPVGIIMGVVAA, LALLGVSVPSFWLAILAVILF, WLRSLILPASILALFQIGYLA, VSVLTVSGYIFSLLIGGSVVI, and MLFLGFLFVAINVLVDILYTI. In terms of domain architecture, ABC transmembrane type-1 spans 96–305; sequence LPVTISLALL…AINVLVDILY (210 aa).

This sequence belongs to the binding-protein-dependent transport system permease family. As to quaternary structure, the complex is composed of two ATP-binding proteins (BMEII0205 and BMEII0206), two transmembrane proteins (BMEII0207/BMEII0208 and BMEII0209) and a solute-binding protein (BMEII0210).

It localises to the cell inner membrane. Its function is as follows. Probably part of an ABC transporter complex that could be involved in peptide import. Probably responsible for the translocation of the substrate across the membrane. This is Putative peptide transport system permease protein BMEII0209 from Brucella melitensis biotype 1 (strain ATCC 23456 / CCUG 17765 / NCTC 10094 / 16M).